Consider the following 447-residue polypeptide: Argininosuccinate synthase (447 aa).

ATP is bound by residues 17 to 25 (AFSGGLDTS) and A43. L-citrulline is bound at residue Y99. G129 and T131 together coordinate ATP. Residues T131, N135, and D136 each coordinate L-aspartate. N135 lines the L-citrulline pocket. D136 is an ATP binding site. Residues R139 and S192 each contribute to the L-citrulline site. Residue D194 coordinates ATP. Residues T201, E203, and E280 each contribute to the L-citrulline site.

Belongs to the argininosuccinate synthase family. Type 2 subfamily. Homotetramer.

The protein localises to the cytoplasm. The catalysed reaction is L-citrulline + L-aspartate + ATP = 2-(N(omega)-L-arginino)succinate + AMP + diphosphate + H(+). It functions in the pathway amino-acid biosynthesis; L-arginine biosynthesis; L-arginine from L-ornithine and carbamoyl phosphate: step 2/3. The sequence is that of Argininosuccinate synthase (argG) from Escherichia coli O157:H7.